We begin with the raw amino-acid sequence, 511 residues long: Apolipoprotein N-acyltransferase (511 aa).

6 helical membrane-spanning segments follow: residues 24–44, 58–78, 90–110, 125–145, 163–183, and 192–212; these read LALA…LLYL, GWWY…VSIH, FLML…AWLW, LAFA…LTGF, VPVG…ALLV, and GASL…GLYL. In terms of domain architecture, CN hydrolase spans 230-470; that stretch reads IQGNIAQELK…QGILRGEVIP (241 aa). Residue E269 is the Proton acceptor of the active site. Residue K330 is part of the active site. Catalysis depends on C382, which acts as the Nucleophile. The helical transmembrane segment at 482 to 502 threads the bilayer; sequence VWPLAGLAGVLLLWALLGRQL.

It belongs to the CN hydrolase family. Apolipoprotein N-acyltransferase subfamily.

The protein resides in the cell inner membrane. The catalysed reaction is N-terminal S-1,2-diacyl-sn-glyceryl-L-cysteinyl-[lipoprotein] + a glycerophospholipid = N-acyl-S-1,2-diacyl-sn-glyceryl-L-cysteinyl-[lipoprotein] + a 2-acyl-sn-glycero-3-phospholipid + H(+). Its pathway is protein modification; lipoprotein biosynthesis (N-acyl transfer). Its function is as follows. Catalyzes the phospholipid dependent N-acylation of the N-terminal cysteine of apolipoprotein, the last step in lipoprotein maturation. The sequence is that of Apolipoprotein N-acyltransferase from Pseudomonas aeruginosa (strain UCBPP-PA14).